The chain runs to 138 residues: Transcription antitermination protein NusB (138 aa).

The protein belongs to the NusB family.

In terms of biological role, involved in transcription antitermination. Required for transcription of ribosomal RNA (rRNA) genes. Binds specifically to the boxA antiterminator sequence of the ribosomal RNA (rrn) operons. This chain is Transcription antitermination protein NusB, found in Yersinia enterocolitica serotype O:8 / biotype 1B (strain NCTC 13174 / 8081).